Consider the following 126-residue polypeptide: Large ribosomal subunit protein bL12 (126 aa).

Belongs to the bacterial ribosomal protein bL12 family. In terms of assembly, homodimer. Part of the ribosomal stalk of the 50S ribosomal subunit. Forms a multimeric L10(L12)X complex, where L10 forms an elongated spine to which 2 to 4 L12 dimers bind in a sequential fashion. Binds GTP-bound translation factors.

In terms of biological role, forms part of the ribosomal stalk which helps the ribosome interact with GTP-bound translation factors. Is thus essential for accurate translation. This is Large ribosomal subunit protein bL12 from Desulforudis audaxviator (strain MP104C).